The primary structure comprises 160 residues: SsrA-binding protein (160 aa).

It belongs to the SmpB family.

The protein localises to the cytoplasm. In terms of biological role, required for rescue of stalled ribosomes mediated by trans-translation. Binds to transfer-messenger RNA (tmRNA), required for stable association of tmRNA with ribosomes. tmRNA and SmpB together mimic tRNA shape, replacing the anticodon stem-loop with SmpB. tmRNA is encoded by the ssrA gene; the 2 termini fold to resemble tRNA(Ala) and it encodes a 'tag peptide', a short internal open reading frame. During trans-translation Ala-aminoacylated tmRNA acts like a tRNA, entering the A-site of stalled ribosomes, displacing the stalled mRNA. The ribosome then switches to translate the ORF on the tmRNA; the nascent peptide is terminated with the 'tag peptide' encoded by the tmRNA and targeted for degradation. The ribosome is freed to recommence translation, which seems to be the essential function of trans-translation. The sequence is that of SsrA-binding protein from Sodalis glossinidius (strain morsitans).